The chain runs to 602 residues: uncharacterized protein (602 aa).

The protein belongs to the IIV-6 098R family.

This is an uncharacterized protein from Acheta domesticus (House cricket).